Reading from the N-terminus, the 238-residue chain is Single-stranded DNA-binding protein WHY2, mitochondrial (238 aa).

The N-terminal 29 residues, Met1–Phe29, are a transit peptide targeting the mitochondrion. Residues Lys62 to Leu67 form a required for ssDNA binding region.

The protein belongs to the Whirly family. Homotetramer.

The protein resides in the mitochondrion. Functionally, single-stranded DNA-binding protein that associates with mitochondrial DNA and may play a role in the regulation of the gene expression machinery. Also seems to be required to prevent break-induced DNA rearrangements in the mitochondrial genome. Can bind to melt double-stranded DNA in vivo. This Arabidopsis thaliana (Mouse-ear cress) protein is Single-stranded DNA-binding protein WHY2, mitochondrial (WHY2).